The following is a 203-amino-acid chain: Orotate phosphoribosyltransferase (203 aa).

5-phospho-alpha-D-ribose 1-diphosphate contacts are provided by residues Arg94, Lys98, His100, and 120–128; that span reads EDLISTGGS. An orotate-binding site is contributed by Ser124.

It belongs to the purine/pyrimidine phosphoribosyltransferase family. PyrE subfamily. In terms of assembly, homodimer. Mg(2+) is required as a cofactor.

It carries out the reaction orotidine 5'-phosphate + diphosphate = orotate + 5-phospho-alpha-D-ribose 1-diphosphate. Its pathway is pyrimidine metabolism; UMP biosynthesis via de novo pathway; UMP from orotate: step 1/2. In terms of biological role, catalyzes the transfer of a ribosyl phosphate group from 5-phosphoribose 1-diphosphate to orotate, leading to the formation of orotidine monophosphate (OMP). The chain is Orotate phosphoribosyltransferase from Staphylococcus aureus (strain MSSA476).